Reading from the N-terminus, the 440-residue chain is MNVQLNSLSDTRKSLVVSLEASEVDAAHQEVVAEFARQARIPGFRPGKAPAAIIAKRFAKDITDEFKQRVVTKAYRDGLEKQKLDVLTVVNVEPGEVAQGKPASVTITVDVRPDFKLPDYVGLPTSVAPSEATEDEVDRVIEGMRAERAEFKVAERPAAKGDYVKLAYEGKIDGKPIAEIAPDKQIYSKVPQTWEEVEGANEGVIPGLGKQLAGLKVGDKKDVEIDFPADFAAVPELAGKKAVYAAEVLEVRERVLPPLDEAFFKAQHVGNLETLKVSVRSEIKRRKEAQNRAEQRRQVTDALTAKVDFPIPESLIESETQTVLRSFIEENMRRGVPQEQFEKDKKELFEGARQAATKRVKSRLVLAKIAEAEKVEVNEQDIDAFIYREAMRTGQKPDKLVKMLTTDREQLRAVQQSIIFDKAIDFLVSKATVTTVQPKG.

A PPIase FKBP-type domain is found at 161 to 257 (GDYVKLAYEG…VLEVRERVLP (97 aa)).

This sequence belongs to the FKBP-type PPIase family. Tig subfamily.

It is found in the cytoplasm. It carries out the reaction [protein]-peptidylproline (omega=180) = [protein]-peptidylproline (omega=0). In terms of biological role, involved in protein export. Acts as a chaperone by maintaining the newly synthesized protein in an open conformation. Functions as a peptidyl-prolyl cis-trans isomerase. The sequence is that of Trigger factor from Opitutus terrae (strain DSM 11246 / JCM 15787 / PB90-1).